Consider the following 298-residue polypeptide: Mimecan (298 aa).

The signal sequence occupies residues 1-20 (MKTLQSTLLLLLFVPLIKPA). An N-linked (GlcNAc...) (keratan sulfate) asparagine glycan is attached at asparagine 88. 7 LRR repeats span residues 112–131 (DAVP…FNKI), 132–155 (KKLT…GNLI), 156–179 (EDIE…ENQL), 180–199 (LKLP…YNKI), 200–225 (KSRG…HNAL), 226–246 (ESVP…FNNI), and 247–277 (ASIT…GNPI). N-linked (GlcNAc...) (keratan sulfate) asparagine glycosylation occurs at asparagine 214. Residues cysteine 255 and cysteine 288 are joined by a disulfide bond. Residue asparagine 258 is glycosylated (N-linked (GlcNAc...) (keratan sulfate) asparagine).

Belongs to the small leucine-rich proteoglycan (SLRP) family. SLRP class III subfamily. Contains keratan sulfate.

It localises to the secreted. The protein localises to the extracellular space. The protein resides in the extracellular matrix. Induces bone formation in conjunction with TGF-beta-1 or TGF-beta-2. This Pongo abelii (Sumatran orangutan) protein is Mimecan (OGN).